Here is a 338-residue protein sequence, read N- to C-terminus: Anthranilate phosphoribosyltransferase (338 aa).

Residues G81, 84-85 (GD), T89, 91-94 (NVST), 109-117 (KHGNRSVSS), and S121 each bind 5-phospho-alpha-D-ribose 1-diphosphate. G81 serves as a coordination point for anthranilate. S93 is a binding site for Mg(2+). N112 lines the anthranilate pocket. R167 contributes to the anthranilate binding site. D226 and E227 together coordinate Mg(2+).

It belongs to the anthranilate phosphoribosyltransferase family. Homodimer. Mg(2+) is required as a cofactor.

The catalysed reaction is N-(5-phospho-beta-D-ribosyl)anthranilate + diphosphate = 5-phospho-alpha-D-ribose 1-diphosphate + anthranilate. It participates in amino-acid biosynthesis; L-tryptophan biosynthesis; L-tryptophan from chorismate: step 2/5. Its function is as follows. Catalyzes the transfer of the phosphoribosyl group of 5-phosphorylribose-1-pyrophosphate (PRPP) to anthranilate to yield N-(5'-phosphoribosyl)-anthranilate (PRA). The sequence is that of Anthranilate phosphoribosyltransferase from Alkalilimnicola ehrlichii (strain ATCC BAA-1101 / DSM 17681 / MLHE-1).